A 148-amino-acid chain; its full sequence is SsrA-binding protein (148 aa).

The disordered stretch occupies residues 123 to 148; sequence KLHDKRETEKKRDWEREKARIMRSAT. Positions 126 to 142 are enriched in basic and acidic residues; the sequence is DKRETEKKRDWEREKAR.

The protein belongs to the SmpB family.

It is found in the cytoplasm. Its function is as follows. Required for rescue of stalled ribosomes mediated by trans-translation. Binds to transfer-messenger RNA (tmRNA), required for stable association of tmRNA with ribosomes. tmRNA and SmpB together mimic tRNA shape, replacing the anticodon stem-loop with SmpB. tmRNA is encoded by the ssrA gene; the 2 termini fold to resemble tRNA(Ala) and it encodes a 'tag peptide', a short internal open reading frame. During trans-translation Ala-aminoacylated tmRNA acts like a tRNA, entering the A-site of stalled ribosomes, displacing the stalled mRNA. The ribosome then switches to translate the ORF on the tmRNA; the nascent peptide is terminated with the 'tag peptide' encoded by the tmRNA and targeted for degradation. The ribosome is freed to recommence translation, which seems to be the essential function of trans-translation. This chain is SsrA-binding protein, found in Burkholderia pseudomallei (strain 1710b).